The chain runs to 181 residues: Translation initiation factor IF-3, chloroplastic (181 aa).

It belongs to the IF-3 family. In terms of assembly, monomer.

It localises to the plastid. Its subcellular location is the chloroplast. IF-3 binds to the 30S ribosomal subunit and shifts the equilibrium between 70S ribosomes and their 50S and 30S subunits in favor of the free subunits, thus enhancing the availability of 30S subunits on which protein synthesis initiation begins. The protein is Translation initiation factor IF-3, chloroplastic of Gracilaria tenuistipitata var. liui (Red alga).